The following is a 218-amino-acid chain: Small ribosomal subunit protein uS3c (218 aa).

Residues 47 to 118 (VQKNMKTSSG…KLNIAITRIE (72 aa)) form the KH type-2 domain.

This sequence belongs to the universal ribosomal protein uS3 family. In terms of assembly, part of the 30S ribosomal subunit.

It is found in the plastid. It localises to the chloroplast. This is Small ribosomal subunit protein uS3c (rps3) from Lactuca sativa (Garden lettuce).